A 218-amino-acid polypeptide reads, in one-letter code: Thiopurine S-methyltransferase (218 aa).

The S-adenosyl-L-methionine site is built by Trp10, Leu45, Glu66, and Arg123.

This sequence belongs to the class I-like SAM-binding methyltransferase superfamily. TPMT family.

The protein localises to the cytoplasm. It catalyses the reaction S-adenosyl-L-methionine + a thiopurine = S-adenosyl-L-homocysteine + a thiopurine S-methylether.. The chain is Thiopurine S-methyltransferase from Shewanella amazonensis (strain ATCC BAA-1098 / SB2B).